The chain runs to 362 residues: Phosphoserine aminotransferase (362 aa).

Arg-43 serves as a coordination point for L-glutamate. Pyridoxal 5'-phosphate is bound by residues Ala-77–Thr-78, Trp-103, Thr-153, Asp-173, and Gln-196. At Lys-197 the chain carries N6-(pyridoxal phosphate)lysine. Asn-238–Thr-239 contacts pyridoxal 5'-phosphate.

The protein belongs to the class-V pyridoxal-phosphate-dependent aminotransferase family. SerC subfamily. As to quaternary structure, homodimer. Requires pyridoxal 5'-phosphate as cofactor.

It is found in the cytoplasm. It carries out the reaction O-phospho-L-serine + 2-oxoglutarate = 3-phosphooxypyruvate + L-glutamate. The catalysed reaction is 4-(phosphooxy)-L-threonine + 2-oxoglutarate = (R)-3-hydroxy-2-oxo-4-phosphooxybutanoate + L-glutamate. Its pathway is amino-acid biosynthesis; L-serine biosynthesis; L-serine from 3-phospho-D-glycerate: step 2/3. It functions in the pathway cofactor biosynthesis; pyridoxine 5'-phosphate biosynthesis; pyridoxine 5'-phosphate from D-erythrose 4-phosphate: step 3/5. In terms of biological role, catalyzes the reversible conversion of 3-phosphohydroxypyruvate to phosphoserine and of 3-hydroxy-2-oxo-4-phosphonooxybutanoate to phosphohydroxythreonine. The protein is Phosphoserine aminotransferase of Xylella fastidiosa (strain Temecula1 / ATCC 700964).